The following is a 138-amino-acid chain: Transcription antitermination protein NusB (138 aa).

This sequence belongs to the NusB family.

Functionally, involved in transcription antitermination. Required for transcription of ribosomal RNA (rRNA) genes. Binds specifically to the boxA antiterminator sequence of the ribosomal RNA (rrn) operons. The polypeptide is Transcription antitermination protein NusB (Helicobacter acinonychis (strain Sheeba)).